Here is a 406-residue protein sequence, read N- to C-terminus: Biofilm regulatory protein A (406 aa).

A signal peptide spans 1-26 (MKIGKKILIMLVTIFLTSLVALGVYA). Over residues 347-397 (SSSASDYSSSGNYSGSSSDYGSSSSYGSNSSSGSSSDYSGQNSYNQGNYQQ) the composition is skewed to low complexity. Positions 347–406 (SSSASDYSSSGNYSGSSSDYGSSSSYGSNSSSGSSSDYSGQNSYNQGNYQQPAAGTGIGN) are disordered.

The protein belongs to the LytR/CpsA/Psr (LCP) family.

Its subcellular location is the cell envelope. Involved in biofilm formation, cell division, autolysis and the regulation of acid and oxidative stress tolerance. May be associated with systemic virulence in blood. The chain is Biofilm regulatory protein A (brpA) from Streptococcus mutans serotype c (strain ATCC 700610 / UA159).